Consider the following 395-residue polypeptide: Endophilin-B2 (395 aa).

Methionine 1 is modified (N-acetylmethionine). The tract at residues 1–27 (MDFNMKKLASDAGIFFTRAVQFTEEKF) is membrane-binding amphipathic helix. The residue at position 10 (serine 10) is a Phosphoserine. Residues 24–287 (EEKFGQAEKT…LGRFPGTFVG (264 aa)) enclose the BAR domain. 2 coiled-coil regions span residues 116 to 132 (IKVAEAEKQLGAAERDF) and 206 to 240 (ASALWNDEVDKAEQELRVAQTEFDRQAEVTRLLLE). Residues 335–395 (SGTRKARVLY…VPVTYLELLS (61 aa)) form the SH3 domain. Serine 395 carries the post-translational modification Phosphoserine.

This sequence belongs to the endophilin family. In terms of assembly, homodimer, and heterodimer with SH3GLB1. As to expression, detected in skeletal muscle, adipocyte, brain, lung, colon and mammary gland.

The protein resides in the cytoplasm. This is Endophilin-B2 (SH3GLB2) from Homo sapiens (Human).